Reading from the N-terminus, the 316-residue chain is Ribosomal RNA small subunit methyltransferase H (316 aa).

S-adenosyl-L-methionine contacts are provided by residues 37–39 (GGH), Asp56, Phe83, Asp106, and His113. The interval 276 to 316 (PILPSEEETKENPASRSAKLRVLRKTKSADKKYKKENSKEE) is disordered. Residues 302–316 (KSADKKYKKENSKEE) show a composition bias toward basic and acidic residues.

The protein belongs to the methyltransferase superfamily. RsmH family.

It localises to the cytoplasm. The enzyme catalyses cytidine(1402) in 16S rRNA + S-adenosyl-L-methionine = N(4)-methylcytidine(1402) in 16S rRNA + S-adenosyl-L-homocysteine + H(+). Functionally, specifically methylates the N4 position of cytidine in position 1402 (C1402) of 16S rRNA. In Leptospira borgpetersenii serovar Hardjo-bovis (strain JB197), this protein is Ribosomal RNA small subunit methyltransferase H.